A 176-amino-acid polypeptide reads, in one-letter code: Ribosome rescue factor SmrB (176 aa).

The Smr domain maps to 93 to 168 (LDLHGYRQSE…GDAALLVLID (76 aa)).

This sequence belongs to the SmrB family. In terms of assembly, associates with collided ribosomes, but not with correctly translating polysomes.

Its function is as follows. Acts as a ribosome collision sensor. Detects stalled/collided disomes (pairs of ribosomes where the leading ribosome is stalled and a second ribosome has collided with it) and endonucleolytically cleaves mRNA at the 5' boundary of the stalled ribosome. Stalled/collided disomes form a new interface (primarily via the 30S subunits) that binds SmrB. Cleaved mRNA becomes available for tmRNA ligation, leading to ribosomal subunit dissociation and rescue of stalled ribosomes. This chain is Ribosome rescue factor SmrB, found in Shewanella sp. (strain ANA-3).